A 176-amino-acid polypeptide reads, in one-letter code: Small ribosomal subunit protein uS4 (176 aa).

An S4 RNA-binding domain is found at 104–166 (RRLQTIVYKK…PTSPFKQNPP (63 aa)).

This sequence belongs to the universal ribosomal protein uS4 family. Part of the 30S ribosomal subunit. Contacts protein S5. The interaction surface between S4 and S5 is involved in control of translational fidelity.

In terms of biological role, one of the primary rRNA binding proteins, it binds directly to 16S rRNA where it nucleates assembly of the body of the 30S subunit. With S5 and S12 plays an important role in translational accuracy. The protein is Small ribosomal subunit protein uS4 (rps4) of Sulfolobus acidocaldarius (strain ATCC 33909 / DSM 639 / JCM 8929 / NBRC 15157 / NCIMB 11770).